The following is a 336-amino-acid chain: tRNA dimethylallyltransferase (336 aa).

19–26 (GPTASGKT) lines the ATP pocket. 21–26 (TASGKT) is a binding site for substrate.

It belongs to the IPP transferase family. Monomer. It depends on Mg(2+) as a cofactor.

The enzyme catalyses adenosine(37) in tRNA + dimethylallyl diphosphate = N(6)-dimethylallyladenosine(37) in tRNA + diphosphate. Functionally, catalyzes the transfer of a dimethylallyl group onto the adenine at position 37 in tRNAs that read codons beginning with uridine, leading to the formation of N6-(dimethylallyl)adenosine (i(6)A). This Bifidobacterium adolescentis (strain ATCC 15703 / DSM 20083 / NCTC 11814 / E194a) protein is tRNA dimethylallyltransferase.